A 189-amino-acid polypeptide reads, in one-letter code: FUN14 domain-containing protein 2 (189 aa).

Residues 1–80 (METSAPRAGS…GQESGPSAEK (80 aa)) lie on the Cytoplasmic side of the membrane. Residues S10 and S53 each carry the phosphoserine modification. Residues 81–101 (YSVATQLFIGGVTGWCTGFIF) traverse the membrane as a helical segment. At 102–107 (QNVGKL) the chain is on the mitochondrial intermembrane side. Residues 108 to 128 (AATAVGGGFFLLQLANHTGYI) traverse the membrane as a helical segment. At 129-164 (KVDWQRVEKDMKKAKEQLKIRKSNQMPTEVRSKAEE) the chain is on the cytoplasmic side. A Phosphoserine modification is found at S151. A helical transmembrane segment spans residues 165-185 (VVSFVKKNVLVTGGFFGGFLL). At 186-189 (GMAS) the chain is on the mitochondrial intermembrane side.

Belongs to the FUN14 family.

The protein resides in the mitochondrion outer membrane. It is found in the nucleus. Binds directly and specifically 1,2-Diacyl-sn-glycero-3-phospho-(1'-myo-inositol-3',4',5'-bisphosphate) (PIP3) leading to the recruitment of PIP3 to mitochondria and may play a role in the regulation of the platelet activation via AKT/GSK3B/cGMP signaling pathways. May act as transcription factor that regulates SREBP1 (isoform SREBP-1C) expression in order to modulate triglyceride (TG) homeostasis in hepatocytes. The protein is FUN14 domain-containing protein 2 of Macaca mulatta (Rhesus macaque).